A 567-amino-acid chain; its full sequence is Laccase-7 (567 aa).

An N-terminal signal peptide occupies residues 1 to 23; sequence MEGVRVPIACALILLAISSITSA. Plastocyanin-like domains are found at residues 31-147 and 157-310; these read NVQN…PKSG and KEVP…YGGA. N-linked (GlcNAc...) asparagine glycosylation is found at asparagine 34, asparagine 50, and asparagine 77. Histidine 81 and histidine 83 together coordinate Cu cation. Asparagine 115 is a glycosylation site (N-linked (GlcNAc...) asparagine). Residues histidine 126 and histidine 128 each coordinate Cu cation. N-linked (GlcNAc...) asparagine glycans are attached at residues asparagine 186, asparagine 298, asparagine 339, asparagine 374, asparagine 386, asparagine 427, and asparagine 450. The Plastocyanin-like 3 domain occupies 412–551; the sequence is DFPDQPPVKF…GMIFVVKNGP (140 aa). The Cu cation site is built by histidine 468, histidine 471, histidine 473, histidine 530, cysteine 531, histidine 532, and histidine 536.

Belongs to the multicopper oxidase family. It depends on Cu cation as a cofactor. In terms of tissue distribution, predominantly expressed in tissues other than the inflorescence stem.

It localises to the secreted. It is found in the extracellular space. The protein localises to the apoplast. The enzyme catalyses 4 hydroquinone + O2 = 4 benzosemiquinone + 2 H2O. In terms of biological role, lignin degradation and detoxification of lignin-derived products. This Arabidopsis thaliana (Mouse-ear cress) protein is Laccase-7 (LAC7).